A 73-amino-acid polypeptide reads, in one-letter code: uncharacterized protein (73 aa).

A helical membrane pass occupies residues Ala-37–Ala-57.

The protein resides in the membrane. This is an uncharacterized protein from Natronomonas pharaonis (strain ATCC 35678 / DSM 2160 / CIP 103997 / JCM 8858 / NBRC 14720 / NCIMB 2260 / Gabara) (Halobacterium pharaonis).